A 215-amino-acid chain; its full sequence is RWD domain-containing protein C1393.09c (215 aa).

An RWD domain is found at E7 to I114.

The protein localises to the cytoplasm. The protein resides in the nucleus. This chain is RWD domain-containing protein C1393.09c, found in Schizosaccharomyces pombe (strain 972 / ATCC 24843) (Fission yeast).